The following is a 31-amino-acid chain: Acetyl-CoA carboxylase (31 aa).

The segment at 1–31 is disordered; sequence RISSSVIAHKTQLDSGKREVYSSHMQLGGPK. Basic and acidic residues predominate over residues 11–21; that stretch reads TQLDSGKREVY.

It catalyses the reaction hydrogencarbonate + acetyl-CoA + ATP = malonyl-CoA + ADP + phosphate + H(+). Its pathway is lipid metabolism; malonyl-CoA biosynthesis; malonyl-CoA from acetyl-CoA: step 1/1. The sequence is that of Acetyl-CoA carboxylase from Catharanthus roseus (Madagascar periwinkle).